Consider the following 278-residue polypeptide: Protein irg-2 (278 aa).

The segment at N152 to S179 is disordered. Positions Q163–S179 are enriched in polar residues.

Its function is as follows. Plays a role in innate immunity by conferring resistance to virulent strains of the Gram-negative bacterium P.aeruginosa via the zip-2 pathway and independent of the pmk-1 p38MAPK pathway. Induced as part of several immune responses to translational inhibition arising from endocytosis of ToxA during P.aeruginosa infection or exposure to exogenous cycloheximide. The chain is Protein irg-2 from Caenorhabditis elegans.